A 365-amino-acid chain; its full sequence is Prostaglandin E2 receptor EP3 subtype (365 aa).

The tract at residues Met-1–Asp-22 is disordered. The Extracellular segment spans residues Met-1–Ala-30. Positions Ala-13–Asp-22 are enriched in polar residues. Residue Asn-16 is glycosylated (N-linked (GlcNAc...) asparagine). A helical membrane pass occupies residues Phe-31–Arg-55. At Arg-56–Cys-68 the chain is on the cytoplasmic side. Residues Ile-69–Leu-89 traverse the membrane as a helical segment. Residues Val-90–Thr-108 lie on the Extracellular side of the membrane. Cys-107 and Cys-184 form a disulfide bridge. The chain crosses the membrane as a helical span at residues Phe-109–Val-130. Residues Glu-131–Thr-151 lie on the Cytoplasmic side of the membrane. A helical transmembrane segment spans residues Pro-152–Gly-173. Topologically, residues Arg-174–Ser-203 are extracellular. A glycan (N-linked (GlcNAc...) asparagine) is linked at Asn-193. The chain crosses the membrane as a helical span at residues Val-204–Ile-229. Residues Lys-230–Gln-259 lie on the Cytoplasmic side of the membrane. Residues Leu-260–Phe-283 traverse the membrane as a helical segment. The Extracellular portion of the chain corresponds to Asn-284–Ser-303. Residues Phe-304–Leu-325 traverse the membrane as a helical segment. Over Arg-326–Arg-365 the chain is Cytoplasmic.

This sequence belongs to the G-protein coupled receptor 1 family. Interacts (via C-terminus) with MKLN1. Ligand binding is affected by cAMP-dependent phosphorylation in brain membranes. Detected in platelets. Kidney, uterus, and mastocytoma cells, and in a lesser amount in brain, thymus, lung, heart, stomach and spleen.

The protein localises to the cell membrane. Receptor for prostaglandin E2 (PGE2). Required for normal development of fever in response to pyrinogens, including IL1B, prostaglandin E2 and bacterial lipopolysaccharide (LPS). Required for normal potentiation of platelet aggregation by prostaglandin E2, and thus plays a role in the regulation of blood coagulation. Required for increased HCO3(-) secretion in the duodenum in response to mucosal acidification, and thereby contributes to the protection of the mucosa against acid-induced ulceration. Not required for normal kidney function, normal urine volume and osmolality. Its function is as follows. Receptor for prostaglandin E2 (PGE2); ligand binding activates a signaling cascade via G(i) proteins that leads to inhibition of adenylate cyclase. Shows high agonist-independent constitutive inhibition of adenylate cyclase. In terms of biological role, receptor for prostaglandin E2 (PGE2); ligand binding activates a signaling cascade via G(i) proteins that leads to inhibition of adenylate cyclase. Requires much higher ligand concentrations than isoform Alpha for activation. Does not display agonist-independent constitutive inhibition of adenylate cyclase. Functionally, receptor for prostaglandin E2 (PGE2); ligand binding can activate several distinct signaling cascades, resulting in activation or inhibition of adenylate cyclase. The sequence is that of Prostaglandin E2 receptor EP3 subtype (Ptger3) from Mus musculus (Mouse).